A 216-amino-acid polypeptide reads, in one-letter code: Redox-sensing transcriptional repressor Rex (216 aa).

Positions 17-56 form a DNA-binding region, H-T-H motif; the sequence is IYFRYLTFLHDAGTDRISSAELSDAIKFDAATIRRDFSYF. 91–96 lines the NAD(+) pocket; the sequence is GAGNLG.

It belongs to the transcriptional regulatory Rex family. Homodimer.

The protein localises to the cytoplasm. Modulates transcription in response to changes in cellular NADH/NAD(+) redox state. The sequence is that of Redox-sensing transcriptional repressor Rex from Leuconostoc citreum (strain KM20).